The sequence spans 246 residues: Proteasome subunit beta type-4 (246 aa).

Residues 1-23 (MTTFSVPIDNGDSMKIAEEESQR) constitute a propeptide that is removed on maturation. Residue T24 is the Nucleophile of the active site.

This sequence belongs to the peptidase T1B family. As to quaternary structure, component of the 20S core complex of the 26S proteasome. The 26S proteasome is composed of a core protease (CP), known as the 20S proteasome, capped at one or both ends by the 19S regulatory particle (RP/PA700). The 20S proteasome core is composed of 28 subunits that are arranged in four stacked rings, resulting in a barrel-shaped structure. The two end rings are each formed by seven alpha subunits, and the two central rings are each formed by seven beta subunits. The catalytic chamber with the active sites is on the inside of the barrel. Ubiquitous low levels, higher expression in siliques and flowers.

It localises to the cytoplasm. Its subcellular location is the nucleus. In terms of biological role, non-catalytic component of the proteasome, a multicatalytic proteinase complex which is characterized by its ability to cleave peptides with Arg, Phe, Tyr, Leu, and Glu adjacent to the leaving group at neutral or slightly basic pH. The proteasome has an ATP-dependent proteolytic activity. The polypeptide is Proteasome subunit beta type-4 (PBG1) (Arabidopsis thaliana (Mouse-ear cress)).